The following is a 121-amino-acid chain: Putative iron-sulfur cluster insertion protein ErpA (121 aa).

The iron-sulfur cluster site is built by Cys49, Cys113, and Cys115.

The protein belongs to the HesB/IscA family. As to quaternary structure, homodimer. Iron-sulfur cluster is required as a cofactor.

Its function is as follows. Required for insertion of 4Fe-4S clusters. The polypeptide is Putative iron-sulfur cluster insertion protein ErpA (Polaromonas sp. (strain JS666 / ATCC BAA-500)).